We begin with the raw amino-acid sequence, 218 residues long: Probable transaldolase (218 aa).

The active-site Schiff-base intermediate with substrate is the Lys84.

Belongs to the transaldolase family. Type 3B subfamily.

It is found in the cytoplasm. It catalyses the reaction D-sedoheptulose 7-phosphate + D-glyceraldehyde 3-phosphate = D-erythrose 4-phosphate + beta-D-fructose 6-phosphate. Its pathway is carbohydrate degradation; pentose phosphate pathway; D-glyceraldehyde 3-phosphate and beta-D-fructose 6-phosphate from D-ribose 5-phosphate and D-xylulose 5-phosphate (non-oxidative stage): step 2/3. In terms of biological role, transaldolase is important for the balance of metabolites in the pentose-phosphate pathway. In Bartonella henselae (strain ATCC 49882 / DSM 28221 / CCUG 30454 / Houston 1) (Rochalimaea henselae), this protein is Probable transaldolase.